Reading from the N-terminus, the 300-residue chain is ClpXP adapter protein SpxH (300 aa).

This sequence belongs to the SpxH family. In terms of assembly, interacts with Spx.

Its subcellular location is the cytoplasm. In terms of biological role, adapter protein required for efficient degradation of Spx by ClpXP under non-stress conditions. Interaction with Spx stabilizes Spx and exposes the C-terminus of Spx for recognition and proteolysis by ClpXP. The protein is ClpXP adapter protein SpxH of Shouchella clausii (strain KSM-K16) (Alkalihalobacillus clausii).